A 402-amino-acid chain; its full sequence is Arginine biosynthesis bifunctional protein ArgJ (402 aa).

Residues Thr-152, Lys-178, Thr-189, Glu-275, Asn-397, and Thr-402 each contribute to the substrate site. Thr-189 (nucleophile) is an active-site residue.

This sequence belongs to the ArgJ family. Heterotetramer of two alpha and two beta chains.

The protein resides in the cytoplasm. The enzyme catalyses N(2)-acetyl-L-ornithine + L-glutamate = N-acetyl-L-glutamate + L-ornithine. It carries out the reaction L-glutamate + acetyl-CoA = N-acetyl-L-glutamate + CoA + H(+). The protein operates within amino-acid biosynthesis; L-arginine biosynthesis; L-ornithine and N-acetyl-L-glutamate from L-glutamate and N(2)-acetyl-L-ornithine (cyclic): step 1/1. It participates in amino-acid biosynthesis; L-arginine biosynthesis; N(2)-acetyl-L-ornithine from L-glutamate: step 1/4. In terms of biological role, catalyzes two activities which are involved in the cyclic version of arginine biosynthesis: the synthesis of N-acetylglutamate from glutamate and acetyl-CoA as the acetyl donor, and of ornithine by transacetylation between N(2)-acetylornithine and glutamate. The polypeptide is Arginine biosynthesis bifunctional protein ArgJ (Symbiobacterium thermophilum (strain DSM 24528 / JCM 14929 / IAM 14863 / T)).